The sequence spans 513 residues: ATP synthase subunit alpha (513 aa).

169–176 (GDRQTGKT) serves as a coordination point for ATP.

It belongs to the ATPase alpha/beta chains family. As to quaternary structure, F-type ATPases have 2 components, CF(1) - the catalytic core - and CF(0) - the membrane proton channel. CF(1) has five subunits: alpha(3), beta(3), gamma(1), delta(1), epsilon(1). CF(0) has three main subunits: a(1), b(2) and c(9-12). The alpha and beta chains form an alternating ring which encloses part of the gamma chain. CF(1) is attached to CF(0) by a central stalk formed by the gamma and epsilon chains, while a peripheral stalk is formed by the delta and b chains.

It is found in the cell inner membrane. It catalyses the reaction ATP + H2O + 4 H(+)(in) = ADP + phosphate + 5 H(+)(out). In terms of biological role, produces ATP from ADP in the presence of a proton gradient across the membrane. The alpha chain is a regulatory subunit. The sequence is that of ATP synthase subunit alpha from Bordetella pertussis (strain Tohama I / ATCC BAA-589 / NCTC 13251).